Reading from the N-terminus, the 125-residue chain is Small ribosomal subunit protein eS8 (125 aa).

It belongs to the eukaryotic ribosomal protein eS8 family. As to quaternary structure, part of the 30S ribosomal subunit.

This is Small ribosomal subunit protein eS8 from Methanocella arvoryzae (strain DSM 22066 / NBRC 105507 / MRE50).